We begin with the raw amino-acid sequence, 1101 residues long: Endoglucanase C (1101 aa).

Residues Met-1–Ala-32 form the signal peptide. CBM-cenC domains lie at Leu-64–Leu-173 and Met-212–Ile-318. Positions Pro-329–Tyr-880 are catalytic. Asp-506 (nucleophile) is an active-site residue. His-831 is an active-site residue. Residues Gln-838–Thr-865 are disordered. Catalysis depends on residues Asp-882 and Glu-891. Ig-like domains are found at residues Thr-918 to Glu-1006 and Ala-1008 to Gln-1097.

It belongs to the glycosyl hydrolase 9 (cellulase E) family.

The enzyme catalyses Endohydrolysis of (1-&gt;4)-beta-D-glucosidic linkages in cellulose, lichenin and cereal beta-D-glucans.. The biological conversion of cellulose to glucose generally requires three types of hydrolytic enzymes: (1) Endoglucanases which cut internal beta-1,4-glucosidic bonds; (2) Exocellobiohydrolases that cut the disaccharide cellobiose from the non-reducing end of the cellulose polymer chain; (3) Beta-1,4-glucosidases which hydrolyze the cellobiose and other short cello-oligosaccharides to glucose. The sequence is that of Endoglucanase C (cenC) from Cellulomonas fimi (strain ATCC 484 / DSM 20113 / JCM 1341 / CCUG 24087 / LMG 16345 / NBRC 15513 / NCIMB 8980 / NCTC 7547 / NRS-133).